A 68-amino-acid polypeptide reads, in one-letter code: Palustrin-1c (68 aa).

The first 22 residues, Met1 to Cys22, serve as a signal peptide directing secretion. A propeptide spanning residues Glu23–Thr39 is cleaved from the precursor. The cysteines at positions 62 and 68 are disulfide-linked.

In terms of tissue distribution, expressed by the skin glands.

The protein localises to the secreted. Functionally, antimicrobial activity against Gram-negative bacterium E.coli. Stimulates insulin release. This chain is Palustrin-1c, found in Lithobates palustris (Pickerel frog).